A 367-amino-acid chain; its full sequence is Alginate lyase (367 aa).

The N-terminal stretch at 1 to 24 (MTAFKRIFSPALLVLALYGGAAHA) is a signal peptide. Residues 63 to 64 (SK), 136 to 137 (HT), and Tyr-254 contribute to the substrate site.

It belongs to the polysaccharide lyase 5 family.

The protein resides in the periplasm. It catalyses the reaction Eliminative cleavage of alginate to give oligosaccharides with 4-deoxy-alpha-L-erythro-hex-4-enuronosyl groups at their non-reducing ends and beta-D-mannuronate at their reducing end.. Catalyzes the depolymerization of alginate by cleaving the beta-1,4 glycosidic bond between two adjacent sugar residues via a beta-elimination mechanism. May serve to degrade mislocalized alginate that is trapped in the periplasmic space. The sequence is that of Alginate lyase from Pseudomonas putida (strain W619).